We begin with the raw amino-acid sequence, 431 residues long: MTKFTTFFTENNIEIKNKKFLLAASGGPDSVALLKMLVNFLPNPSEQLIVAHLDHCLRDDSFLESQLLQRLTSALKVKLVEKKWPVELHPQAGVEAKAREYRYAFLAKVGRKYQTDYLLTAHHGDDLIENILLKFIRSGDVAEMNSLQIVGNLGSMKLLRPLVKYSKDELLKYDKDHHLDFIEDKTNFEDDTLRNRLRHHVVPLLKKETSHLVKNANHFSESVALLSKCQSDLFDSLPSPINFSKALRGKKEDIARLNTHEAAAFFDYLIYKKWHQRIHFDEIDLNKNVIFNKENFQLLFYQKYYYLINRNELAVIDPKRKLVKLNEKFSFNGKKYLITQDEKSQKLAGYFYGEKAKYLEVGSLPQGSTLKLATGKQTKAKKKFAENGIPLALRPYCLTVWQEENPVYVESVYQNQEYNPNFIRYNVYIYF.

25–30 contacts ATP; the sequence is SGGPDS.

Belongs to the tRNA(Ile)-lysidine synthase family.

It localises to the cytoplasm. It carries out the reaction cytidine(34) in tRNA(Ile2) + L-lysine + ATP = lysidine(34) in tRNA(Ile2) + AMP + diphosphate + H(+). Its function is as follows. Ligates lysine onto the cytidine present at position 34 of the AUA codon-specific tRNA(Ile) that contains the anticodon CAU, in an ATP-dependent manner. Cytidine is converted to lysidine, thus changing the amino acid specificity of the tRNA from methionine to isoleucine. The chain is tRNA(Ile)-lysidine synthase from Lactobacillus johnsonii (strain CNCM I-12250 / La1 / NCC 533).